The following is a 289-amino-acid chain: ATP synthase gamma chain (289 aa).

The protein belongs to the ATPase gamma chain family. In terms of assembly, F-type ATPases have 2 components, CF(1) - the catalytic core - and CF(0) - the membrane proton channel. CF(1) has five subunits: alpha(3), beta(3), gamma(1), delta(1), epsilon(1). CF(0) has three main subunits: a, b and c.

It is found in the cell inner membrane. Its function is as follows. Produces ATP from ADP in the presence of a proton gradient across the membrane. The gamma chain is believed to be important in regulating ATPase activity and the flow of protons through the CF(0) complex. The protein is ATP synthase gamma chain of Cereibacter sphaeroides (strain ATCC 17029 / ATH 2.4.9) (Rhodobacter sphaeroides).